Here is a 101-residue protein sequence, read N- to C-terminus: DNA-binding protein Fis (101 aa).

Residues 77–96 constitute a DNA-binding region (H-T-H motif); it reads QTRAANMLGINRGTLRKKLK.

This sequence belongs to the transcriptional regulatory Fis family. As to quaternary structure, homodimer.

Functionally, activates ribosomal RNA transcription. Plays a direct role in upstream activation of rRNA promoters. This Shewanella sediminis (strain HAW-EB3) protein is DNA-binding protein Fis.